Here is a 227-residue protein sequence, read N- to C-terminus: MNIFNPNHDRKAIVIFSGGQDSTTCLFQAIAEYGKENIEAITFQYGQRHAIELEKARAIVQDLGIKQTLIDTSVMKAITHNALMDEQAHIEQKENELPNTFVDGRNALFLLYAAIYAKGQGIQDIITGVCETDFSGYPDCRDVFIKSMNVTLNLAMDYQFNIKTPLMYLTKAQTWQLADELGVLNYVQKHTHTCYEGIEGGCGKCPSCILRNKGLKKYLTQKGRKNV.

An ATP-binding site is contributed by 16-26; the sequence is FSGGQDSTTCL. 4 residues coordinate Zn(2+): Cys-194, Cys-202, Cys-205, and Cys-208.

This sequence belongs to the QueC family. It depends on Zn(2+) as a cofactor.

It catalyses the reaction 7-carboxy-7-deazaguanine + NH4(+) + ATP = 7-cyano-7-deazaguanine + ADP + phosphate + H2O + H(+). The protein operates within purine metabolism; 7-cyano-7-deazaguanine biosynthesis. In terms of biological role, catalyzes the ATP-dependent conversion of 7-carboxy-7-deazaguanine (CDG) to 7-cyano-7-deazaguanine (preQ(0)). The protein is 7-cyano-7-deazaguanine synthase of Haemophilus influenzae (strain PittEE).